The primary structure comprises 578 residues: Cyclin-SDS (578 aa).

The tract at residues 1 to 31 is disordered; sequence MKEIAMRNSKRKPEPTPFAGKKLRSTRLRRK. The segment covering 21–31 has biased composition (basic residues); that stretch reads KKLRSTRLRRK.

The protein belongs to the cyclin family. In terms of assembly, may interact with CDKA-1 and CDKB1-1.

In terms of biological role, meiosis-specific cyclin. Required for normal homolog synapsis and recombination in early to mid-prophase 1. May regulate the timing of sister chromatid separation. The polypeptide is Cyclin-SDS (SDS) (Arabidopsis thaliana (Mouse-ear cress)).